The following is a 178-amino-acid chain: Large ribosomal subunit protein eL20 (178 aa).

The protein belongs to the eukaryotic ribosomal protein eL20 family.

This chain is Large ribosomal subunit protein eL20 (RPL18A), found in Castanea sativa (Sweet chestnut).